Consider the following 151-residue polypeptide: D-aminoacyl-tRNA deacylase (151 aa).

Positions 137 to 138 (GP) match the Gly-cisPro motif, important for rejection of L-amino acids motif.

This sequence belongs to the DTD family. Homodimer.

The protein localises to the cytoplasm. The catalysed reaction is glycyl-tRNA(Ala) + H2O = tRNA(Ala) + glycine + H(+). It carries out the reaction a D-aminoacyl-tRNA + H2O = a tRNA + a D-alpha-amino acid + H(+). Its function is as follows. An aminoacyl-tRNA editing enzyme that deacylates mischarged D-aminoacyl-tRNAs. Also deacylates mischarged glycyl-tRNA(Ala), protecting cells against glycine mischarging by AlaRS. Acts via tRNA-based rather than protein-based catalysis; rejects L-amino acids rather than detecting D-amino acids in the active site. By recycling D-aminoacyl-tRNA to D-amino acids and free tRNA molecules, this enzyme counteracts the toxicity associated with the formation of D-aminoacyl-tRNA entities in vivo and helps enforce protein L-homochirality. The chain is D-aminoacyl-tRNA deacylase from Listeria monocytogenes serotype 4a (strain HCC23).